An 88-amino-acid chain; its full sequence is Molybdopterin synthase sulfur carrier subunit (88 aa).

Glycine 88 carries the post-translational modification 1-thioglycine; alternate. A Glycyl adenylate; alternate modification is found at glycine 88.

The protein belongs to the MoaD family. MOCS2A subfamily. As to quaternary structure, heterotetramer; composed of 2 small (MOCS2A) and 2 large (MOCS2B) subunits. Post-translationally, C-terminal thiocarboxylation occurs in 2 steps, it is first acyl-adenylated (-COAMP) via the hesA/moeB/thiF part of MOCS3, then thiocarboxylated (-COSH) via the rhodanese domain of MOCS3. As to expression, widely expressed. Highest levels are found in heart and skeletal muscle. Lower levels are present in brain, kidney and pancreas. Very low levels are found in lung and peripheral blood leukocytes.

Its subcellular location is the cytoplasm. It is found in the cytosol. The protein operates within cofactor biosynthesis; molybdopterin biosynthesis. Its function is as follows. Acts as a sulfur carrier required for molybdopterin biosynthesis. Component of the molybdopterin synthase complex that catalyzes the conversion of precursor Z into molybdopterin by mediating the incorporation of 2 sulfur atoms into precursor Z to generate a dithiolene group. In the complex, serves as sulfur donor by being thiocarboxylated (-COSH) at its C-terminus by MOCS3. After interaction with MOCS2B, the sulfur is then transferred to precursor Z to form molybdopterin. The chain is Molybdopterin synthase sulfur carrier subunit from Homo sapiens (Human).